An 86-amino-acid chain; its full sequence is ATP synthase subunit c (86 aa).

Transmembrane regions (helical) follow at residues 8–28 and 64–84; these read VLGC…GPGI and TTGL…PLLG.

The protein belongs to the ATPase C chain family. As to quaternary structure, F-type ATPases have 2 components, F(1) - the catalytic core - and F(0) - the membrane proton channel. F(1) has five subunits: alpha(3), beta(3), gamma(1), delta(1), epsilon(1). F(0) has three main subunits: a(1), b(2) and c(10-14). The alpha and beta chains form an alternating ring which encloses part of the gamma chain. F(1) is attached to F(0) by a central stalk formed by the gamma and epsilon chains, while a peripheral stalk is formed by the delta and b chains.

It localises to the cell membrane. In terms of biological role, f(1)F(0) ATP synthase produces ATP from ADP in the presence of a proton or sodium gradient. F-type ATPases consist of two structural domains, F(1) containing the extramembraneous catalytic core and F(0) containing the membrane proton channel, linked together by a central stalk and a peripheral stalk. During catalysis, ATP synthesis in the catalytic domain of F(1) is coupled via a rotary mechanism of the central stalk subunits to proton translocation. Functionally, key component of the F(0) channel; it plays a direct role in translocation across the membrane. A homomeric c-ring of between 10-14 subunits forms the central stalk rotor element with the F(1) delta and epsilon subunits. The protein is ATP synthase subunit c of Lachnoclostridium phytofermentans (strain ATCC 700394 / DSM 18823 / ISDg) (Clostridium phytofermentans).